Consider the following 642-residue polypeptide: Threonine--tRNA ligase (642 aa).

The TGS domain occupies 1-61 (MPIITLPDGS…EEDASLEIIT (61 aa)). The catalytic stretch occupies residues 244-535 (DHRKIGKQLD…LIEEYAGFFP (292 aa)). Residues cysteine 335, histidine 386, and histidine 512 each coordinate Zn(2+).

This sequence belongs to the class-II aminoacyl-tRNA synthetase family. Homodimer. Requires Zn(2+) as cofactor.

The protein localises to the cytoplasm. The catalysed reaction is tRNA(Thr) + L-threonine + ATP = L-threonyl-tRNA(Thr) + AMP + diphosphate + H(+). Functionally, catalyzes the attachment of threonine to tRNA(Thr) in a two-step reaction: L-threonine is first activated by ATP to form Thr-AMP and then transferred to the acceptor end of tRNA(Thr). Also edits incorrectly charged L-seryl-tRNA(Thr). This chain is Threonine--tRNA ligase, found in Vibrio vulnificus (strain CMCP6).